The primary structure comprises 313 residues: Malate dehydrogenase (313 aa).

Residues Gly8–Gly13 and Asp33 each bind NAD(+). Residues Arg83 and Arg89 each coordinate substrate. NAD(+) contacts are provided by residues Asn96 and Ile119–Asn121. Positions 121 and 152 each coordinate substrate. His176 (proton acceptor) is an active-site residue.

The protein belongs to the LDH/MDH superfamily. MDH type 3 family.

The catalysed reaction is (S)-malate + NAD(+) = oxaloacetate + NADH + H(+). In terms of biological role, catalyzes the reversible oxidation of malate to oxaloacetate. This chain is Malate dehydrogenase, found in Parabacteroides distasonis (strain ATCC 8503 / DSM 20701 / CIP 104284 / JCM 5825 / NCTC 11152).